Here is a 255-residue protein sequence, read N- to C-terminus: 5'-nucleotidase SurE (255 aa).

4 residues coordinate a divalent metal cation: D8, D9, S40, and N93.

It belongs to the SurE nucleotidase family. The cofactor is a divalent metal cation.

Its subcellular location is the cytoplasm. The catalysed reaction is a ribonucleoside 5'-phosphate + H2O = a ribonucleoside + phosphate. In terms of biological role, nucleotidase that shows phosphatase activity on nucleoside 5'-monophosphates. This is 5'-nucleotidase SurE from Bradyrhizobium diazoefficiens (strain JCM 10833 / BCRC 13528 / IAM 13628 / NBRC 14792 / USDA 110).